A 156-amino-acid chain; its full sequence is MLPVEHHVRIGQILIAENGEVLKTVLGSCVGIALVWRRQNKWALAHCLLPYPETFKEDKEARYVSQTIPRMLERMGATMADVSELEAIVAGGGRMMDGDKNYIKFVVGDENLKAAKAVLEKHRIRIVAFEPGGEQGTKMRIAGDGDYSIEKLPKTA.

The protein belongs to the CheD family.

It catalyses the reaction L-glutaminyl-[protein] + H2O = L-glutamyl-[protein] + NH4(+). Its function is as follows. Probably deamidates glutamine residues to glutamate on methyl-accepting chemotaxis receptors (MCPs), playing an important role in chemotaxis. The protein is Probable chemoreceptor glutamine deamidase CheD of Bdellovibrio bacteriovorus (strain ATCC 15356 / DSM 50701 / NCIMB 9529 / HD100).